The primary structure comprises 29 residues: U1-pseudomyrmecitoxin-Pt1 subunit SS1 (29 aa).

It belongs to the myrmexin family. Heterodimer composed of subunit SS1 and subunit LS1 (U1-PSDTX-Pt1b), and heterodimer composed of subunit SS1 and LS2 (U1-PSDTX-Pt1a); disulfide-linked. As to expression, expressed by the venom gland.

The protein localises to the secreted. Functionally, this heterodimer may have anti-inflammatory properties, since the myrmexin complex (composed of 6 SS-LS heterodimers) inhibits carrageenin-induced edema in a dose-dependent manner (after subcutaneous injection into rats). The protein is U1-pseudomyrmecitoxin-Pt1 subunit SS1 of Pseudomyrmex triplarinus (Ant).